A 188-amino-acid chain; its full sequence is Peptidyl-tRNA hydrolase (188 aa).

Phe15 is a binding site for tRNA. Catalysis depends on His20, which acts as the Proton acceptor. TRNA-binding residues include Tyr64, Asn66, and Asn112.

This sequence belongs to the PTH family. As to quaternary structure, monomer.

The protein localises to the cytoplasm. It carries out the reaction an N-acyl-L-alpha-aminoacyl-tRNA + H2O = an N-acyl-L-amino acid + a tRNA + H(+). Functionally, hydrolyzes ribosome-free peptidyl-tRNAs (with 1 or more amino acids incorporated), which drop off the ribosome during protein synthesis, or as a result of ribosome stalling. Its function is as follows. Catalyzes the release of premature peptidyl moieties from peptidyl-tRNA molecules trapped in stalled 50S ribosomal subunits, and thus maintains levels of free tRNAs and 50S ribosomes. This chain is Peptidyl-tRNA hydrolase, found in Borrelia duttonii (strain Ly).